A 205-amino-acid polypeptide reads, in one-letter code: Purine catabolism protein PucB (205 aa).

Its pathway is purine metabolism; hypoxanthine degradation. In terms of biological role, required for xanthine dehydrogenase activity. Could be involved in formation of the molybdenum cofactor required by xanthine dehydrogenase. In Bacillus subtilis (strain 168), this protein is Purine catabolism protein PucB (pucB).